A 393-amino-acid polypeptide reads, in one-letter code: Riboflavin biosynthesis protein RibBA (393 aa).

A DHBP synthase region spans residues 1–200 (MQLDSIDTAL…IEDLEKYRKS (200 aa)). D-ribulose 5-phosphate is bound by residues 27–28 (RE), Asp32, 139–143 (RRGHT), and Glu163. Glu28 is a binding site for Mg(2+). Mg(2+) is bound at residue His142. Residues 201 to 393 (SISKLDAKAK…TKKEKMGHLI (193 aa)) are GTP cyclohydrolase II. A GTP-binding site is contributed by 249-253 (RIHSA). The Zn(2+) site is built by Cys254, Cys265, and Cys267. GTP contacts are provided by residues Gln270, 291-293 (EGR), and Thr313. The active-site Proton acceptor; for GTP cyclohydrolase activity is Asp325. The active-site Nucleophile; for GTP cyclohydrolase activity is the Arg327. Positions 348 and 353 each coordinate GTP.

It in the N-terminal section; belongs to the DHBP synthase family. The protein in the C-terminal section; belongs to the GTP cyclohydrolase II family. Mg(2+) serves as cofactor. Requires Mn(2+) as cofactor. The cofactor is Zn(2+).

It carries out the reaction D-ribulose 5-phosphate = (2S)-2-hydroxy-3-oxobutyl phosphate + formate + H(+). The catalysed reaction is GTP + 4 H2O = 2,5-diamino-6-hydroxy-4-(5-phosphoribosylamino)-pyrimidine + formate + 2 phosphate + 3 H(+). It functions in the pathway cofactor biosynthesis; riboflavin biosynthesis; 2-hydroxy-3-oxobutyl phosphate from D-ribulose 5-phosphate: step 1/1. It participates in cofactor biosynthesis; riboflavin biosynthesis; 5-amino-6-(D-ribitylamino)uracil from GTP: step 1/4. Catalyzes the conversion of D-ribulose 5-phosphate to formate and 3,4-dihydroxy-2-butanone 4-phosphate. Its function is as follows. Catalyzes the conversion of GTP to 2,5-diamino-6-ribosylamino-4(3H)-pyrimidinone 5'-phosphate (DARP), formate and pyrophosphate. The chain is Riboflavin biosynthesis protein RibBA from Staphylococcus saprophyticus subsp. saprophyticus (strain ATCC 15305 / DSM 20229 / NCIMB 8711 / NCTC 7292 / S-41).